The sequence spans 201 residues: Recombination protein RecR (201 aa).

The C4-type zinc finger occupies 57–72; the sequence is CQQCRNFTEEALCEIC. The Toprim domain occupies 81–176; it reads TTLCIVETPG…NISRIAHGVP (96 aa).

It belongs to the RecR family.

May play a role in DNA repair. It seems to be involved in an RecBC-independent recombinational process of DNA repair. It may act with RecF and RecO. The polypeptide is Recombination protein RecR (Colwellia psychrerythraea (strain 34H / ATCC BAA-681) (Vibrio psychroerythus)).